A 147-amino-acid chain; its full sequence is Large ribosomal subunit protein uL13 (147 aa).

Belongs to the universal ribosomal protein uL13 family. As to quaternary structure, part of the 50S ribosomal subunit.

In terms of biological role, this protein is one of the early assembly proteins of the 50S ribosomal subunit, although it is not seen to bind rRNA by itself. It is important during the early stages of 50S assembly. The protein is Large ribosomal subunit protein uL13 of Pediococcus pentosaceus (strain ATCC 25745 / CCUG 21536 / LMG 10740 / 183-1w).